Reading from the N-terminus, the 244-residue chain is Lipoprotein-releasing system ATP-binding protein LolD (244 aa).

The region spanning 19-244 (IRAEALAKTY…KLRELAPSAV (226 aa)) is the ABC transporter domain. Residue 55 to 62 (GASGAGKS) participates in ATP binding.

It belongs to the ABC transporter superfamily. Lipoprotein translocase (TC 3.A.1.125) family. In terms of assembly, the complex is composed of two ATP-binding proteins (LolD) and two transmembrane proteins (LolC and LolE).

It is found in the cell inner membrane. Part of the ABC transporter complex LolCDE involved in the translocation of mature outer membrane-directed lipoproteins, from the inner membrane to the periplasmic chaperone, LolA. Responsible for the formation of the LolA-lipoprotein complex in an ATP-dependent manner. The polypeptide is Lipoprotein-releasing system ATP-binding protein LolD (Xanthomonas axonopodis pv. citri (strain 306)).